We begin with the raw amino-acid sequence, 685 residues long: Stromal interaction molecule 1 (685 aa).

The signal sequence occupies residues 1–22; the sequence is MDVCARLALWLLWGLLLHQGQS. The Extracellular segment spans residues 23–213; sequence LSHSHSEKNT…LLTRHNHLKD (191 aa). The interval 24–43 is disordered; sequence SHSHSEKNTGASSGATSEES. Residues 32–41 are compositionally biased toward low complexity; the sequence is TGASSGATSE. EF-hand domains lie at 64–97 and 102–126; these read SFEA…EDLN and TVKH…AWKA. Ca(2+) contacts are provided by aspartate 76, aspartate 78, asparagine 80, aspartate 82, and glutamate 87. 2 N-linked (GlcNAc...) asparagine glycosylation sites follow: asparagine 131 and asparagine 171. Residues 132–200 form the SAM domain; the sequence is WTVDEVIQWL…QLKALDTVLF (69 aa). Residues 214-234 traverse the membrane as a helical segment; that stretch reads FMLVVSIVIGVGGCWFAYIQN. Over 235–685 the chain is Cytoplasmic; that stretch reads RYSKEHMKKM…LKIFKKPLKK (451 aa). A coiled-coil region spans residues 248-442; it reads LEGLHRAEQS…IEILCGFQIV (195 aa). Serine 257 carries the post-translational modification Phosphoserine. The tract at residues 344–442 is SOAR/CAD; the sequence is PEALQKWLQL…IEILCGFQIV (99 aa). A contributes to fast Ca(2+)-dependent inactivation of CRAC channels region spans residues 475 to 483; the sequence is DDVDDMDEE. A compositionally biased stretch (low complexity) spans 490–499; sequence MQSPSLQSSV. Residues 490 to 542 are disordered; it reads MQSPSLQSSVRQRLTEPQHGLGSQRDLTHSDSESSLHTSDRQRVAPKPPQMGR. A Phosphothreonine modification is found at threonine 504. Serine 512 is modified (phosphoserine). Basic and acidic residues predominate over residues 515-532; that stretch reads DLTHSDSESSLHTSDRQR. The residue at position 517 (threonine 517) is a Phosphothreonine. 11 positions are modified to phosphoserine: serine 519, serine 521, serine 523, serine 524, serine 567, serine 575, serine 602, serine 608, serine 618, serine 621, and serine 628. The disordered stretch occupies residues 596-685; the sequence is LMELNPSVPP…LKIFKKPLKK (90 aa). A compositionally biased stretch (low complexity) spans 608 to 620; sequence SPLLDSSHSHSPS. Residues 642–645 carry the Microtubule tip localization signal motif; the sequence is TRIP. Over residues 655–666 the composition is skewed to acidic residues; that stretch reads EEDNGSIGEETD. At serine 660 the chain carries Phosphoserine. Phosphothreonine is present on threonine 665. Residue serine 668 is modified to Phosphoserine. A compositionally biased stretch (basic residues) spans 670-685; sequence GRKKFPLKIFKKPLKK. The segment at 672-685 is required for generation of inwardly rectifying CRAC currents; the sequence is KKFPLKIFKKPLKK.

Monomer in the presence of Ca(2+). It oligomerizes in absence of Ca(2+). Forms homooligomers and heterooligomers with STIM2. Interacts with pore-forming subunits of CRAC channels, ORAI1, ORAI2 and ORAI3; this interaction is potentiated upon Ca(2+) store depletion. Interacts (via the transmembrane region and the SOAR/CAD domain) with SPPL3; the interaction promotes the binding of STIM1 to ORAI1. Interacts with ORAI1. Interacts with MAPRE1; probably required for targeting to the growing microtubule plus ends. Interacts with CRACR2A/EFCAB4B; the interaction is direct and takes place in absence of Ca(2+). Forms a complex with CRACR2A/EFCAB4B and ORAI1 at low concentration of Ca(2+), the complex dissociates at elevated Ca(2+) concentrations. Interacts with SARAF, promoting a slow inactivation of STIM1-dependent SOCE activity, possibly by facilitating the deoligomerization of STIM1. Interacts with EFHB; the interaction takes place upon Ca(2+)-store depletion and inhibits the association with SARAF. Interacts with ASPH. Interacts with SLC35G1; intracellular Ca(2+)-dependent. May interact with ATP1A1, ATP2A2, ATP2B1, ATP2B4, KPNB1 and XPO1; through SLC35G1. Interacts with TMEM203. Interacts with STIMATE, promoting STIM1 conformational switch. Interacts with TMEM178A. Interacts with CASQ1 (via C-terminal end and preferentially with the monomeric form); this interaction increases in response to a depletion of intracellular Ca(2+), decreases both STIM1 aggregation and clustering, interaction of STIM1 with ORAI1 and store-operated Ca(2+) entry (SOCE) activity. Interacts with ADCY8. Post-translationally, glycosylation is required for cell surface expression. In terms of processing, phosphorylated predominantly on Ser residues.

Its subcellular location is the cell membrane. The protein resides in the endoplasmic reticulum membrane. The protein localises to the sarcoplasmic reticulum. It is found in the cytoplasm. It localises to the cytoskeleton. In terms of biological role, acts as a Ca(2+) sensor that gates two major inward rectifying Ca(2+) channels at the plasma membrane: Ca(2+) release-activated Ca(2+) (CRAC) channels and arachidonate-regulated Ca(2+)-selective (ARC) channels. Plays a role in mediating store-operated Ca(2+) entry (SOCE), a Ca(2+) influx following depletion of intracellular Ca(2+) stores. Upon Ca(2+) depletion, translocates from the endoplasmic reticulum to the plasma membrane where it activates CRAC channel pore-forming subunits ORA1, ORA2 and ORAI3 to generate sustained and oscillatory Ca(2+) entry. Involved in enamel formation. This chain is Stromal interaction molecule 1, found in Rattus norvegicus (Rat).